The chain runs to 285 residues: MARCO-like protein (285 aa).

The N-terminal stretch at 1-20 is a signal peptide; it reads MRAFIFFLFMLLAMFSASST. Asn-24 carries N-linked (GlcNAc...) asparagine glycosylation. 2 disordered regions span residues 47–77 and 91–285; these read NHLGGQRDSNKQGGSYTQGNPGTFRLQGQPG and GRAG…QGNL. Polar residues-rich tracts occupy residues 57–67 and 105–114; these read KQGGSYTQGNP and SGKSNQKGNP. Positions 115–128 are enriched in low complexity; that stretch reads ESSNKQENSGSSSQ. The segment covering 134 to 145 has biased composition (polar residues); it reads ISTQQGNPGSSD. A compositionally biased stretch (low complexity) spans 160–173; the sequence is GSSSQQGKPGSSSQ. A compositionally biased stretch (polar residues) spans 174–185; the sequence is HGNLGSSTQKGN. The span at 186–220 shows a compositional bias: low complexity; sequence LGSSSLQGHLGLSSHQGKPESSGQQGKPGSSSQQG. Residues 221–285 are compositionally biased toward polar residues; that stretch reads NLGTSGQQEK…PGSSSRQGNL (65 aa).

The sequence is that of MARCO-like protein from Homo sapiens (Human).